Reading from the N-terminus, the 486-residue chain is Cephamycin export protein CmcT (486 aa).

Transmembrane regions (helical) follow at residues 24 to 44 (VLAC…TVAL), 56 to 76 (ASLQ…LLFG), 88 to 108 (VFLG…LATS), 121 to 141 (AGAA…FAEG), 153 to 173 (AVAL…TEFL), 178 to 198 (VLLV…RVLA), 210 to 230 (LDLP…LGVS), 241 to 261 (AVAV…VVEA), 284 to 304 (LAML…TLSM), 317 to 337 (LGFV…VPWL), 345 to 365 (VLIA…SLLT), 369 to 389 (AYLG…GLVG), 418 to 438 (FGGA…TSGS), and 450 to 470 (FVGI…LPAL).

The protein belongs to the major facilitator superfamily.

Its subcellular location is the cell membrane. Involved in cephamycin export. This Amycolatopsis lactamdurans (Nocardia lactamdurans) protein is Cephamycin export protein CmcT (cmcT).